Consider the following 147-residue polypeptide: Flagellar assembly factor FliW (147 aa).

It belongs to the FliW family. In terms of assembly, interacts with translational regulator CsrA and flagellin(s).

It is found in the cytoplasm. Its function is as follows. Acts as an anti-CsrA protein, binds CsrA and prevents it from repressing translation of its target genes, one of which is flagellin. Binds to flagellin and participates in the assembly of the flagellum. The sequence is that of Flagellar assembly factor FliW from Treponema denticola (strain ATCC 35405 / DSM 14222 / CIP 103919 / JCM 8153 / KCTC 15104).